A 505-amino-acid chain; its full sequence is Glycerol kinase (505 aa).

Thr-15 provides a ligand contact to ADP. Residues Thr-15, Thr-16, and Ser-17 each coordinate ATP. Thr-15 is a binding site for sn-glycerol 3-phosphate. An ADP-binding site is contributed by Arg-19. Sn-glycerol 3-phosphate is bound by residues Arg-85, Glu-86, Tyr-136, and Asp-249. Glycerol contacts are provided by Arg-85, Glu-86, Tyr-136, Asp-249, and Gln-250. ADP contacts are provided by Thr-271 and Gly-314. ATP contacts are provided by Thr-271, Gly-314, Gln-318, and Gly-415. Gly-415 and Asn-419 together coordinate ADP.

Belongs to the FGGY kinase family.

The enzyme catalyses glycerol + ATP = sn-glycerol 3-phosphate + ADP + H(+). It participates in polyol metabolism; glycerol degradation via glycerol kinase pathway; sn-glycerol 3-phosphate from glycerol: step 1/1. Inhibited by fructose 1,6-bisphosphate (FBP). Its function is as follows. Key enzyme in the regulation of glycerol uptake and metabolism. Catalyzes the phosphorylation of glycerol to yield sn-glycerol 3-phosphate. This is Glycerol kinase from Mycoplasma mycoides subsp. mycoides SC (strain CCUG 32753 / NCTC 10114 / PG1).